A 962-amino-acid chain; its full sequence is MAEGRGSRERPDVETQKTELGALMGTTLQRGAQWYLIDSRWFKQWKKYVGFDSWDMYNVGEHNLFPGPIDNSGLFSDPESQTLKEHLIDELDYVLVPAEAWNKLLNWYGCVEGQQPIVRKVVEHGLFVKHCKVEVYLLELKLCENSDPTNVLSCHFSKADTIATIEKEMRKLFNIPAERETRLWNKYMSNTYEQLSKLDNTIQDAGLYQGQVLVIEPQNEDGTWPRQSLQSKSSTAPSRNFTTSSKPSASPYCSVSASLIANGDSTNSSGMHSSGVSRGGSGFSASYNCQEPPSPHIQPGLCGLGNLGNTCFMNSALQCLSNTAPLTEYFLKDEYEAEINRDNPLGMKGEIAEAYAELIKQMWSGRDTHVAPRMFKTQVGRFAPQFSGYQQQDSQELLAFILDGLHEDLNRVKKKPYLEPKDANGRPDAVVAKEAWENHRLRNDSVIVDTFHGLFKSTLVCPECAKVSVTFDPFCYLTLPLPLKKDRIMEVFLVPADPQCRPIQYRVTVPLMGAISDLCEALSKLSGIAAENMVVTDVYNHRFHKIFQMDEGLSHITPRDDIFVYEVCNTSMDGSECITLPVYFREKKSRPSSASSGAVLYGQPLLVSVPKHKLTLESLYQAVCDRISRYIKQPLPDEFLSSPLEPGACNGSRSSYEGDEEEEMDHQEEGKEQLSEVEGSGEDDQGDDHSESAQKVKGQPRHKRLFTFSLVNSCGTADINSLATDGKLLKLNSRSTLAIDWDSETRSLYFDEQESEACEKHLSMSQPQKKKKAAVALRECIELFTTMETLGEHDPWYCPTCKKHQQATKKFDLWSLPKILVVHLKRFSYNRYWRDKLDTVVEFPVRALNMSEFVCDRSARPYVYDLIAVSNHYGAMGVGHYTAYAKNRLNGKWYYFDDSSVSLASEDQIVTKAAYVLFYQRRDDECSSTSSLGSFPGSDGGVKLSSSHQGMGDEEAYNMDTN.

The DUSP domain occupies 11 to 122 (PDVETQKTEL…GQQPIVRKVV (112 aa)). A necessary for interaction with SART3 region spans residues 27 to 216 (TLQRGAQWYL…LYQGQVLVIE (190 aa)). A Nuclear export signal motif is present at residues 133–141 (VEVYLLELK). Residues 142-226 (LCENSDPTNV…PQNEDGTWPR (85 aa)) form the Ubiquitin-like 1 domain. The segment at 220-249 (EDGTWPRQSLQSKSSTAPSRNFTTSSKPSA) is disordered. Residues 225–249 (PRQSLQSKSSTAPSRNFTTSSKPSA) show a composition bias toward polar residues. The tract at residues 229 to 295 (LQSKSSTAPS…SYNCQEPPSP (67 aa)) is required for USP4 activation by providing conformational flexibility between the DUSP and catalytic domains. One can recognise a USP domain in the interval 302 to 922 (CGLGNLGNTC…AAYVLFYQRR (621 aa)). Residue Cys311 is the Nucleophile of the active site. Residues 384–386 (PQF) form a regulates ubiquitin dissociation region. The necessary for interaction with RBL2 stretch occupies residues 405–407 (LHE). Ser445 bears the Phosphoserine mark. Residues 459-463 (LVCPE) are necessary for interaction with RB1 and RBL2. Cys461 and Cys464 together coordinate Zn(2+). Residues 483–571 (LKKDRIMEVF…IFVYEVCNTS (89 aa)) form the Ubiquitin-like 2 domain. The tract at residues 485 to 774 (KDRIMEVFLV…SQPQKKKKAA (290 aa)) is interacts with DUSP and ubiquitin-like 1 domains and is required for USP4 activation. Residues 638–699 (EFLSSPLEPG…SESAQKVKGQ (62 aa)) are disordered. Ser655 is modified (phosphoserine). Positions 657–666 (EGDEEEEMDH) are enriched in acidic residues. A phosphoserine mark is found at Ser675 and Ser680. Positions 766–771 (QPQKKK) match the Nuclear localization signal motif. Positions 798 and 801 each coordinate Zn(2+). The active-site Proton acceptor is the His880. Residues 928 to 937 (STSSLGSFPG) show a composition bias toward low complexity. The tract at residues 928-962 (STSSLGSFPGSDGGVKLSSSHQGMGDEEAYNMDTN) is disordered. Residues 952–962 (GDEEAYNMDTN) are compositionally biased toward acidic residues.

This sequence belongs to the peptidase C19 family. USP4 subfamily. In terms of assembly, interacts with RB1 (both dephosphorylated and hypophosphorylated forms). Interacts with RBL1 and RBL2. Interacts with ADORA2A (via cytoplasmic C-terminus); the interaction is direct. Interacts with SART3; recruits USP4 to its substrate PRPF3. Post-translationally, phosphorylated at Ser-445 by PKB/AKT1 in response to EGF stimulus, promoting its ability deubiquitinate RHEB. Monoubiquitinated by TRIM21. Ubiquitination does not lead to its proteasomal degradation. Autodeubiquitinated. In terms of tissue distribution, expressed in brain, kidney, liver and spleen (at protein level).

It is found in the cytoplasm. The protein localises to the nucleus. It catalyses the reaction Thiol-dependent hydrolysis of ester, thioester, amide, peptide and isopeptide bonds formed by the C-terminal Gly of ubiquitin (a 76-residue protein attached to proteins as an intracellular targeting signal).. The completion of the deubiquitinase reaction is mediated by the DUSP and ubiquitin-like 1 domains which promotes the release of ubiquitin from the catalytic site enabling subsequent reactions to occur. Its function is as follows. Deubiquitinating enzyme that removes conjugated ubiquitin from target proteins. Deubiquitinates PDPK1. Deubiquitinates TRIM21. Deubiquitinates receptor ADORA2A which increases the amount of functional receptor at the cell surface. Deubiquitinates HAS2. Deubiquitinates RHEB in response to EGF signaling, promoting mTORC1 signaling. May regulate mRNA splicing through deubiquitination of the U4 spliceosomal protein PRPF3. This may prevent its recognition by the U5 component PRPF8 thereby destabilizing interactions within the U4/U6.U5 snRNP. May also play a role in the regulation of quality control in the ER. The sequence is that of Ubiquitin carboxyl-terminal hydrolase 4 (Usp4) from Mus musculus (Mouse).